The chain runs to 233 residues: 5'-methylthioadenosine/S-adenosylhomocysteine nucleosidase (233 aa).

Glu-12 serves as the catalytic Proton acceptor. Substrate contacts are provided by residues Gly-78, Ile-156, and Met-177–Glu-178. Catalysis depends on Asp-201, which acts as the Proton donor.

The protein belongs to the PNP/UDP phosphorylase family. MtnN subfamily.

It carries out the reaction S-adenosyl-L-homocysteine + H2O = S-(5-deoxy-D-ribos-5-yl)-L-homocysteine + adenine. The catalysed reaction is S-methyl-5'-thioadenosine + H2O = 5-(methylsulfanyl)-D-ribose + adenine. The enzyme catalyses 5'-deoxyadenosine + H2O = 5-deoxy-D-ribose + adenine. Its pathway is amino-acid biosynthesis; L-methionine biosynthesis via salvage pathway; S-methyl-5-thio-alpha-D-ribose 1-phosphate from S-methyl-5'-thioadenosine (hydrolase route): step 1/2. Its function is as follows. Catalyzes the irreversible cleavage of the glycosidic bond in both 5'-methylthioadenosine (MTA) and S-adenosylhomocysteine (SAH/AdoHcy) to adenine and the corresponding thioribose, 5'-methylthioribose and S-ribosylhomocysteine, respectively. Also cleaves 5'-deoxyadenosine, a toxic by-product of radical S-adenosylmethionine (SAM) enzymes, into 5-deoxyribose and adenine. The protein is 5'-methylthioadenosine/S-adenosylhomocysteine nucleosidase of Listeria monocytogenes serotype 4b (strain CLIP80459).